A 1427-amino-acid chain; its full sequence is MAFRKENKIKSNFSKISIGLASPEEILENSSGEVLKPETINYRTYKPERDGLFCERIFGPIKDYECHCGKYKRIRYKGIVCDRCGVEVTEKKVRRERMGHIQLVVPVAHIWYFRSLPNKIGYLLGLPTKKLDSIIYYERYVVIQPGVKAEDGIAEFDLLSEEEYLDILDTLPKDNQYLEDTDPNKFIAKMGAEAIYDLLARLDLDALSYELRHRAGNDASQQRKNEALKRLQVVESFRASRGRNKPEWMIVRIVPVIPPELRPLVPLDGGRFATSDLNDLYRRVIIRNNRLKRLIEIKAPEVILRNEKRMLQESVDSLFDNSRKSSAVKTDANRPLKSLSDSLKGKQGRFRQNLLGKRVDYSARSVIVVGPELRMHECGIPKLMAAELYKPFIIRKLIERGIVKTVKSAKKIVDRKEPVIWDILEHVMKGHPVLLNRAPTLHRLGIQAFQPKMIEGKAIQLHPLACTAFNADFDGDQMAVHLPLSNEAVLEAQMLMLASHNILNPANGAPITVPSQDMVLGLYYITKLRKGAKGEGLTFYGPEEALIAYNEGKVDIHAPVKVIVKDLDENGNIVDVMRETSVGRVIVNEIVPPEVGYINTIISKKSLRDIISAVIKACGVARTADFLDGIKNLGYKMAFQGGLSFNLGDIIIPKEKETLVQRGYEEVEQVISNYNMGFITNNERYNQVIDIWTHVNSELSNILMKTISSDDQGFNSVYMMLDSGARGSKEQIRQLSGMRGLMAKPQKAGAEGGQIIENPILSNFKEGLSVLEYFISTHGARKGLADTALKTADAGYLTRRLVDVSHDVIINEEDCGTLRGLVCTDLKNNDEVIATLYERILGRVSVHDIIHPQTGELLVAGGEEITEDIAKKIQESPIESVEIRSVLTCESKKGVCAKCYGRNLATNHMVQKGEAVGVIAAQSIGEPGTQLTLRTFHAGGTAANIAANASIVAKNNARLEFEELRTVDIVDETGEAAKVVVGRLAEVRFIDVNTGIVLSTHNVPYGSTLYVADGEVVEKGKLIAKWDPFNAVIITEATGKIEFEGVIENVTYKIESDEATGLREIIIIESKDKTKVPSAHILTEDGDLIRTYNLPVGGHVVIENGQKVKAGEVIVKIPRAVGKAGDITGGLPRVTELFEARNPSNPAVVSEIDGEVTMGKVKRGNREIIVTSKTGEVKKYLVPLSKQILVQENDYVRAGTPLSDGATTPADILAIKGPTAVQEYIVNEVQDVYRLQGVKINDKHFEIIVRQMMRKVTIDEPGDTRFLEQQVVDKLEFMEENDRIWGKKVVVDAGDSENLKAGQIVTARKLRDENSMLKRRDLKPVEVRDAVAATSTQILQGITRAALQTSSFMSAASFQETTKVLNEAAINGKIDKLEGMKENVICGHLIPAGTGLREFDKIIVGSKEEYDRILANKKTVLDYNEVE.

The Zn(2+) site is built by cysteine 66, cysteine 68, cysteine 81, and cysteine 84. 3 residues coordinate Mg(2+): aspartate 472, aspartate 474, and aspartate 476. Residues cysteine 815, cysteine 889, cysteine 896, and cysteine 899 each coordinate Zn(2+).

This sequence belongs to the RNA polymerase beta' chain family. As to quaternary structure, the RNAP catalytic core consists of 2 alpha, 1 beta, 1 beta' and 1 omega subunit. When a sigma factor is associated with the core the holoenzyme is formed, which can initiate transcription. The cofactor is Mg(2+). Zn(2+) serves as cofactor.

It carries out the reaction RNA(n) + a ribonucleoside 5'-triphosphate = RNA(n+1) + diphosphate. Its function is as follows. DNA-dependent RNA polymerase catalyzes the transcription of DNA into RNA using the four ribonucleoside triphosphates as substrates. The polypeptide is DNA-directed RNA polymerase subunit beta' (Bacteroides fragilis (strain YCH46)).